We begin with the raw amino-acid sequence, 358 residues long: Peptide chain release factor 1 (358 aa).

An N5-methylglutamine modification is found at Gln236.

It belongs to the prokaryotic/mitochondrial release factor family. Post-translationally, methylated by PrmC. Methylation increases the termination efficiency of RF1.

Its subcellular location is the cytoplasm. Peptide chain release factor 1 directs the termination of translation in response to the peptide chain termination codons UAG and UAA. This is Peptide chain release factor 1 from Corynebacterium aurimucosum (strain ATCC 700975 / DSM 44827 / CIP 107346 / CN-1) (Corynebacterium nigricans).